Here is a 286-residue protein sequence, read N- to C-terminus: Non-homologous end joining protein Ku (286 aa).

The Ku domain maps to 10–175 (TVGLVSFPVR…EEVREPDFVV (166 aa)). A compositionally biased stretch (basic and acidic residues) spans 226-242 (ERQERQRREAGEVRQAD). The disordered stretch occupies residues 226 to 270 (ERQERQRREAGEVRQADETDEAAETEVPEVDIPASRAPGETGGEL). Acidic residues predominate over residues 243–254 (ETDEAAETEVPE).

Belongs to the prokaryotic Ku family. As to quaternary structure, homodimer. Interacts with LigD.

With LigD forms a non-homologous end joining (NHEJ) DNA repair enzyme, which repairs dsDNA breaks with reduced fidelity. Binds linear dsDNA with 5'- and 3'- overhangs but not closed circular dsDNA nor ssDNA. Recruits and stimulates the ligase activity of LigD. This chain is Non-homologous end joining protein Ku, found in Actinosynnema mirum (strain ATCC 29888 / DSM 43827 / JCM 3225 / NBRC 14064 / NCIMB 13271 / NRRL B-12336 / IMRU 3971 / 101).